Consider the following 113-residue polypeptide: Large ribosomal subunit protein uL22 (113 aa).

This sequence belongs to the universal ribosomal protein uL22 family. In terms of assembly, part of the 50S ribosomal subunit.

This protein binds specifically to 23S rRNA; its binding is stimulated by other ribosomal proteins, e.g. L4, L17, and L20. It is important during the early stages of 50S assembly. It makes multiple contacts with different domains of the 23S rRNA in the assembled 50S subunit and ribosome. Its function is as follows. The globular domain of the protein is located near the polypeptide exit tunnel on the outside of the subunit, while an extended beta-hairpin is found that lines the wall of the exit tunnel in the center of the 70S ribosome. In Bacillus thuringiensis subsp. konkukian (strain 97-27), this protein is Large ribosomal subunit protein uL22.